Here is a 309-residue protein sequence, read N- to C-terminus: Zinc transporter ZIP2 (309 aa).

Residues 1–8 (MEVLLGVK) lie on the Extracellular side of the membrane. The helical transmembrane segment at 9-29 (IGCLLALLVLTLGCGLTPIYV) threads the bilayer. The Cytoplasmic portion of the chain corresponds to 30–43 (KWFQMDAATGHHHR). Residues 44–64 (VLSLLGCTSAGVFLGAGLMHM) traverse the membrane as a helical segment. Topologically, residues 65–103 (TAEALEGIESEIQKFVEQNSTGSKGNSSRDAASSYVEYP) are extracellular. A helical transmembrane segment spans residues 104–124 (YGELVISLGFFFVFLLESLAL). Residues 125–164 (QCCHGAAGGSTVQEEEWGGTHAFGFHKHPAVPSPSRGPLR) lie on the Cytoplasmic side of the membrane. Residues 165 to 185 (ALVLLLSLSFHSVFEGLAVGL) traverse the membrane as a helical segment. His-175 and Glu-179 together coordinate Zn(2+). The Extracellular portion of the chain corresponds to 186–191 (QATVAA). Residues 192-212 (TIQLCVAVLAHKGLVVFSVGL) traverse the membrane as a helical segment. Residue His-202 participates in Zn(2+) binding. Over 213–225 (RLGKIGTGPRWAT) the chain is Cytoplasmic. Residues 226–246 (FCILSLALMSPVGLALGLTVA) traverse the membrane as a helical segment. Residues 247 to 258 (GGASGQTQGLAQ) lie on the Extracellular side of the membrane. The helical transmembrane segment at 259-279 (AVLEGIAAGTFLYVTFLEILP) threads the bilayer. Glu-276 serves as a coordination point for Zn(2+). At 280 to 288 (RELACPEAP) the chain is on the cytoplasmic side. The chain crosses the membrane as a helical span at residues 289–309 (LAKYSCVAAGFAFMALIALWA).

This sequence belongs to the ZIP transporter (TC 2.A.5) family. As to expression, high expression in the liver, skin and ovary.

It localises to the cell membrane. The catalysed reaction is Zn(2+)(in) = Zn(2+)(out). The enzyme catalyses Cd(2+)(in) = Cd(2+)(out). In terms of biological role, transporter for the divalent cation Zn(2+). Mediates the influx of Zn(2+) into cells from extracellular space. The Zn(2+) uniporter activity is independent of H(+)-driving force, but is modulated by extracellular pH and membrane potential. Transports also other divalent cations Zn(2+), Cd2(+), Cu2(+), Co2(+) in the order of decreasing affinity, respectively. In the skin, aids in the differentiation of keratinocytes in the epidermis. The sequence is that of Zinc transporter ZIP2 (Slc39a2) from Mus musculus (Mouse).